Consider the following 435-residue polypeptide: Ribulose bisphosphate carboxylase/oxygenase activase 2, chloroplastic (435 aa).

Residues 1-56 (MAAAYSTVGAVNRAPLSLNGSGARASLVPSTAFFGSSLKKSAAKFPKASSGNFKIV) constitute a chloroplast transit peptide. 165 to 172 (GGKGQGKS) provides a ligand contact to ATP.

Belongs to the RuBisCO activase family.

The protein resides in the plastid. The protein localises to the chloroplast stroma. In terms of biological role, activation of RuBisCO (ribulose-1,5-bisphosphate carboxylase/oxygenase; EC 4.1.1.39) involves the ATP-dependent carboxylation of the epsilon-amino group of lysine leading to a carbamate structure. This is Ribulose bisphosphate carboxylase/oxygenase activase 2, chloroplastic (RCA2) from Larrea tridentata (Creosote bush).